The following is a 454-amino-acid chain: Aspartate aminotransferase P2, mitochondrial (454 aa).

The N-terminal 49 residues, 1–49 (SSLLSIPSLSLQYNDKLKVGGNSLRFSKEQSNTFSNAKSSCRISMVAAV), are a transit peptide targeting the mitochondrion. L-aspartate-binding residues include Gly86, Trp182, and Asn235. Lys299 carries the post-translational modification N6-(pyridoxal phosphate)lysine. L-aspartate is bound at residue Arg428.

It belongs to the class-I pyridoxal-phosphate-dependent aminotransferase family. In terms of assembly, homodimer. It depends on pyridoxal 5'-phosphate as a cofactor.

Its subcellular location is the mitochondrion matrix. The enzyme catalyses L-aspartate + 2-oxoglutarate = oxaloacetate + L-glutamate. Functionally, important for the metabolism of amino acids and Krebs-cycle related organic acids. In plants, it is involved in nitrogen metabolism and in aspects of carbon and energy metabolism. In Lupinus angustifolius (Narrow-leaved blue lupine), this protein is Aspartate aminotransferase P2, mitochondrial.